Reading from the N-terminus, the 1108-residue chain is Retinal guanylyl cyclase 2 (1108 aa).

Positions 1–50 (MFLGPWPFSRLLSWFAISSRLSGQHGLPSSKFLRCLCLLALLPLLRWGQA) are cleaved as a signal peptide. Topologically, residues 51 to 469 (LPYKIGVIGP…CQGGIDPALA (419 aa)) are extracellular. Cys104 and Cys132 are disulfide-bonded. A helical transmembrane segment spans residues 470-490 (MMVCFALLIALLSINGFAYFI). Residues 491-1108 (RRRINKIQLI…AERQLVRNKP (618 aa)) lie on the Cytoplasmic side of the membrane. The Protein kinase domain maps to 532–812 (FQIISEVQSG…DEIFNQFKTF (281 aa)). The region spanning 884–1014 (TLYFSDIVGF…DTVNTASRME (131 aa)) is the Guanylate cyclase domain.

This sequence belongs to the adenylyl cyclase class-4/guanylyl cyclase family. Homodimer. Interacts with RD3; promotes the exit of GUCY2F from the endoplasmic reticulum and its trafficking to the photoreceptor outer segments. In terms of processing, there are 9 conserved cysteine residues in sensory guanylate cyclases, 6 in the extracellular domain, which may be involved in intra- or interchain disulfide bonds. Retina.

Its subcellular location is the membrane. The protein resides in the photoreceptor outer segment membrane. It carries out the reaction GTP = 3',5'-cyclic GMP + diphosphate. With respect to regulation, activated by GUCA1B when free calcium ions concentration is low, and inhibited by GUCA1B when free calcium ions concentration is high. Inhibited by RD3. Responsible for the synthesis of cyclic GMP (cGMP) in rods and cones of photoreceptors. Plays an essential role in phototransduction, by mediating cGMP replenishment. May also participate in the trafficking of membrane-asociated proteins to the photoreceptor outer segment membrane. In Mus musculus (Mouse), this protein is Retinal guanylyl cyclase 2.